Consider the following 127-residue polypeptide: Small ribosomal subunit protein uS11 (127 aa).

The protein belongs to the universal ribosomal protein uS11 family. In terms of assembly, part of the 30S ribosomal subunit. Interacts with proteins S7 and S18. Binds to IF-3.

Functionally, located on the platform of the 30S subunit, it bridges several disparate RNA helices of the 16S rRNA. Forms part of the Shine-Dalgarno cleft in the 70S ribosome. In Rickettsia africae (strain ESF-5), this protein is Small ribosomal subunit protein uS11.